Reading from the N-terminus, the 371-residue chain is Cytochrome b (371 aa).

4 helical membrane passes run 25–45, 69–90, 105–125, and 170–190; these read FGSM…SLSM, WVMQ…YMYI, WLSG…GYVL, and FFAL…IHIM. His-75 lines the heme b pocket. His-174 and His-188 together coordinate heme b. A ubiquinone is bound at residue His-193. The next 4 membrane-spanning stretches (helical) occupy residues 218-238, 280-300, 312-332, and 339-358; these read YKDI…VSFF, LGGA…PFTH, LMQF…WTAT, and FTTI…MSNP.

This sequence belongs to the cytochrome b family. The cytochrome bc1 complex contains 3 respiratory subunits (MT-CYB, CYC1 and UQCRFS1), 2 core proteins (UQCRC1 and UQCRC2) and probably 6 low-molecular weight proteins. The cofactor is heme b.

Its subcellular location is the mitochondrion inner membrane. Functionally, component of the ubiquinol-cytochrome c reductase complex (complex III or cytochrome b-c1 complex) that is part of the mitochondrial respiratory chain. The b-c1 complex mediates electron transfer from ubiquinol to cytochrome c. Contributes to the generation of a proton gradient across the mitochondrial membrane that is then used for ATP synthesis. This chain is Cytochrome b (MT-CYB), found in Candoia aspera (New Guinea boa).